A 437-amino-acid chain; its full sequence is Minor fimbrial subunit HifE (437 aa).

The first 30 residues, Met-1–Ala-30, serve as a signal peptide directing secretion.

The protein belongs to the fimbrial protein family.

It is found in the fimbrium. May be a minor structural protein required for pilus biogenesis. May be the adhesive component in the pili. This is Minor fimbrial subunit HifE (hifE) from Haemophilus influenzae.